Reading from the N-terminus, the 647-residue chain is DEAD-box ATP-dependent RNA helicase 18 (647 aa).

Residues 23-51 (FSELSPALSPEVVKALKGGGFRRCTPVQA) carry the Q motif motif. The Helicase ATP-binding domain occupies 54–232 (IPLLLSHKDV…KAGLRNPVRV (179 aa)). 67 to 74 (AATGSGKT) lines the ATP pocket. The DEAD box signature appears at 180–183 (DEAD). The 157-residue stretch at 274–430 (QLVDFLVQNN…DIVPQIRSAA (157 aa)) folds into the Helicase C-terminal domain. Positions 507–582 (KYKDKAREKQ…RLLKKLKRGV (76 aa)) form a coiled coil. The segment covering 512-545 (AREKQRQKTLKRKAEELALRPEIEKRRKAPEKPE) has biased composition (basic and acidic residues). 2 disordered regions span residues 512 to 565 (AREK…KEDM) and 590 to 647 (KLTG…TRRR). Acidic residues predominate over residues 596–610 (ESDDDDSSDGGDSDL). A compositionally biased stretch (basic residues) spans 619-633 (KVLKKIKQKGKAKGS).

It belongs to the DEAD box helicase family. DDX55/SPB4 subfamily. In terms of assembly, interacts with BRI1. Phosphorylated.

It carries out the reaction ATP + H2O = ADP + phosphate + H(+). The protein is DEAD-box ATP-dependent RNA helicase 18 of Oryza sativa subsp. japonica (Rice).